A 369-amino-acid polypeptide reads, in one-letter code: MAMHAKIPLNQPQNQDTAQLQPFPLVMSEPENGKRRLLKQLRIKRIPPLSIGDQQITFINTYGFIRANRTFTEFISELHRPGLQPIVTACMLPFGAGPLLDSPEKILEGLDLCEIKVRKSAAVKEEILFEVTALPKIFQGFQISAQPLIKVSSEKYVKAPGKINAGVEYKFYPTFVSLTYCPTTLKIQGRQTLATVRAKFMRSIHLEILLIFECKDDAPMAKALIKRDERDGYQASVWVHMCNITKSTQKFKTYDDSYFGQKVLAMKPVIGLVDMWGPTITVHISGKMPKTAAPYFNSRGRSCHPLSEVAPSIAKMAWSNGCRIHQVNAILQESDLSLIPGSDDILFRKVPVDPENINFKSTYWNPFRK.

It belongs to the morbillivirus/respirovirus/rubulavirus M protein family.

The protein resides in the virion. The M protein has a crucial role in virus assembly and interacts with the RNP complex as well as with the viral membrane. This chain is Matrix protein (M), found in La Piedad-Michoacan-Mexico virus (LPMV).